A 310-amino-acid chain; its full sequence is Ribosomal RNA small subunit methyltransferase H (310 aa).

Residues 33-35, aspartate 52, phenylalanine 79, aspartate 98, and glutamine 105 contribute to the S-adenosyl-L-methionine site; that span reads GGH.

This sequence belongs to the methyltransferase superfamily. RsmH family.

It localises to the cytoplasm. The catalysed reaction is cytidine(1402) in 16S rRNA + S-adenosyl-L-methionine = N(4)-methylcytidine(1402) in 16S rRNA + S-adenosyl-L-homocysteine + H(+). Specifically methylates the N4 position of cytidine in position 1402 (C1402) of 16S rRNA. The polypeptide is Ribosomal RNA small subunit methyltransferase H (Campylobacter jejuni subsp. jejuni serotype O:6 (strain 81116 / NCTC 11828)).